Consider the following 352-residue polypeptide: MENIMLQEIELKLAISPQIGIELPQYLAKFTILEHQNLFLGNTYYDYPDHFLAKQKMGLRIRQEDQELTLTLKTNGKVVSGLHSRPEYNLPLIEKETPTNAQLRGLYPFEQLPSSTLQPIFSTDFNRTFWLVEFQQSKIEVAFDQGKIIAGEYEQPISEIEFELKSGNVQDLFDFVETLPFERDIYFSSASKAKRGYLLGSKQFLTDWLNKWRDFLKEEREESAVDFCAKFNAVLKMEQKLLEETLSFSPTLFSQDFMKTVERVGAFFNLYHYYDENGKILEAMATEKQKETRLPALLESNQKIFVEIRDLIRFHSETKDNEKTIEKLTALLKSRVYFERMIKLMELSYDLG.

The CYTH domain maps to 6 to 203 (LQEIELKLAI…KRGYLLGSKQ (198 aa)).

It carries out the reaction triphosphate + H2O = phosphate + diphosphate. Its function is as follows. Involved in the hydrolysis of the beta-gamma-phosphoanhydride linkage of triphosphate-containing substrates (inorganic or nucleoside-linked). Catalyzes the hydrolysis of inorganic triphosphate (PPPi), which could be cytotoxic because of its high affinity for calcium ion, thereby interfering with calcium signaling. The protein is Inorganic triphosphatase of Haemophilus influenzae (strain ATCC 51907 / DSM 11121 / KW20 / Rd).